A 507-amino-acid polypeptide reads, in one-letter code: Dolichyl pyrophosphate Man9GlcNAc2 alpha-1,3-glucosyltransferase (507 aa).

Residues 1–2 lie on the Cytoplasmic side of the membrane; sequence ME. A helical membrane pass occupies residues 3–23; the sequence is SWPWMAVVVLLGLTVRWTVSL. The Lumenal portion of the chain corresponds to 24 to 114; the sequence is SSYSGAGKPP…SQAHKLFMRA (91 aa). The N-linked (GlcNAc...) asparagine glycan is linked to N59. A helical membrane pass occupies residues 115-135; that stretch reads TVLAADLLIYVPAVLLYCYSL. At 136 to 143 the chain is on the cytoplasmic side; the sequence is KEISPKRK. The chain crosses the membrane as a helical span at residues 144-164; that stretch reads IASALCILLYPGLILIDYGHF. Topologically, residues 165 to 172 are lumenal; it reads QYNSVSLG. Residues 173–193 form a helical membrane-spanning segment; that stretch reads FALWGVLGVSWDWDLLGSLAF. Over 194-229 the chain is Cytoplasmic; the sequence is CLALNYKQMELYHSLPFFCFLLGKCFKKGLKGKGLA. A helical membrane pass occupies residues 230–250; that stretch reads LFIRIACTVLASFLLCWLPFL. The Lumenal segment spans residues 251 to 297; sequence TEREHALQVVRRLFPVDRGLFEDKVANIWCSVNVFLKIKDTLPRHIQ. A helical membrane pass occupies residues 298-318; the sequence is IAISFCFTLLSLLPACIKLTV. Residues 319-332 lie on the Cytoplasmic side of the membrane; sequence RPSCKGFRFTLVSC. A helical membrane pass occupies residues 333 to 353; sequence ALSFFLFSFQVHEKSILLVSL. Over 354 to 361 the chain is Lumenal; sequence PVCLVLTE. The helical transmembrane segment at 362-382 threads the bilayer; the sequence is IPFMSTWFLLVSTFSMLPLLL. Topologically, residues 383–385 are cytoplasmic; sequence KDE. The helical transmembrane segment at 386–406 threads the bilayer; that stretch reads LLLPSVVTVMAFVIACGTFFP. The Lumenal segment spans residues 407 to 437; that stretch reads MLENTSEEQLQLKSFAVSVRRHLPGFTFLPR. Residues 438–458 traverse the membrane as a helical segment; sequence IMQCLFLSSVITMVLLTILSV. Residues 459–468 lie on the Cytoplasmic side of the membrane; the sequence is TLDPPQKLPD. Residues 469–489 traverse the membrane as a helical segment; it reads LFPVLICFVSCVNFVFFLVYF. Residues 490–507 are Lumenal-facing; sequence NIVIMWDSKNGRNRKKIE.

The protein belongs to the ALG6/ALG8 glucosyltransferase family.

It localises to the endoplasmic reticulum membrane. It catalyses the reaction an alpha-D-Man-(1-&gt;2)-alpha-D-Man-(1-&gt;2)-alpha-D-Man-(1-&gt;3)-[alpha-D-Man-(1-&gt;2)-alpha-D-Man-(1-&gt;3)-[alpha-D-Man-(1-&gt;2)-alpha-D-Man-(1-&gt;6)]-alpha-D-Man-(1-&gt;6)]-beta-D-Man-(1-&gt;4)-beta-D-GlcNAc-(1-&gt;4)-alpha-D-GlcNAc-diphospho-di-trans,poly-cis-dolichol + a di-trans,poly-cis-dolichyl beta-D-glucosyl phosphate = an alpha-D-Glc-(1-&gt;3)-alpha-D-Man-(1-&gt;2)-alpha-D-Man-(1-&gt;2)-alpha-D-Man-(1-&gt;3)-[alpha-D-Man-(1-&gt;2)-alpha-D-Man-(1-&gt;3)-[alpha-D-Man-(1-&gt;2)-alpha-D-Man-(1-&gt;6)]-alpha-D-Man-(1-&gt;6)]-beta-D-Man-(1-&gt;4)-beta-D-GlcNAc-(1-&gt;4)-alpha-D-GlcNAc-diphospho-di-trans,poly-cis-dolichol + a di-trans,poly-cis-dolichyl phosphate + H(+). The protein operates within protein modification; protein glycosylation. Dolichyl pyrophosphate Man9GlcNAc2 alpha-1,3-glucosyltransferase that operates in the biosynthetic pathway of dolichol-linked oligosaccharides, the glycan precursors employed in protein asparagine (N)-glycosylation. The assembly of dolichol-linked oligosaccharides begins on the cytosolic side of the endoplasmic reticulum membrane and finishes in its lumen. The sequential addition of sugars to dolichol pyrophosphate produces dolichol-linked oligosaccharides containing fourteen sugars, including two GlcNAcs, nine mannoses and three glucoses. Once assembled, the oligosaccharide is transferred from the lipid to nascent proteins by oligosaccharyltransferases. In the lumen of the endoplasmic reticulum, adds the first glucose residue from dolichyl phosphate glucose (Dol-P-Glc) onto the lipid-linked oligosaccharide intermediate Man(9)GlcNAc(2)-PP-Dol to produce Glc(1)Man(9)GlcNAc(2)-PP-Dol. Glc(1)Man(9)GlcNAc(2)-PP-Dol is a substrate for ALG8, the following enzyme in the biosynthetic pathway. This Mus musculus (Mouse) protein is Dolichyl pyrophosphate Man9GlcNAc2 alpha-1,3-glucosyltransferase.